Here is a 168-residue protein sequence, read N- to C-terminus: Ribosome maturation factor RimP (168 aa).

The protein belongs to the RimP family.

Its subcellular location is the cytoplasm. Required for maturation of 30S ribosomal subunits. In Rickettsia bellii (strain OSU 85-389), this protein is Ribosome maturation factor RimP.